Reading from the N-terminus, the 302-residue chain is uncharacterized protein (302 aa).

The next 9 membrane-spanning stretches (helical) occupy residues 10–30 (VLSV…GVLG), 65–85 (LVLI…IAYL), 102–122 (VAAA…GIFG), 130–150 (IFYD…LSHI), 162–182 (AVFF…LWGL), 190–210 (ILGY…GLTL), 224–244 (LVSG…SYVL), 251–271 (FSVT…VLAI), and 282–302 (SCIF…SVVL).

Belongs to the auxin efflux carrier (TC 2.A.69) family.

It localises to the cell membrane. This is an uncharacterized protein from Methanothermobacter thermautotrophicus (strain ATCC 29096 / DSM 1053 / JCM 10044 / NBRC 100330 / Delta H) (Methanobacterium thermoautotrophicum).